The chain runs to 366 residues: Aminomethyltransferase (366 aa).

This sequence belongs to the GcvT family. As to quaternary structure, the glycine cleavage system is composed of four proteins: P, T, L and H.

The enzyme catalyses N(6)-[(R)-S(8)-aminomethyldihydrolipoyl]-L-lysyl-[protein] + (6S)-5,6,7,8-tetrahydrofolate = N(6)-[(R)-dihydrolipoyl]-L-lysyl-[protein] + (6R)-5,10-methylene-5,6,7,8-tetrahydrofolate + NH4(+). In terms of biological role, the glycine cleavage system catalyzes the degradation of glycine. This Bordetella parapertussis (strain 12822 / ATCC BAA-587 / NCTC 13253) protein is Aminomethyltransferase.